A 135-amino-acid chain; its full sequence is MGNYLLRKLSCLGENQKKPKKGNPDEERKRQEMTTFERKLQDQDKKSQEVSSTSNQENENGSGSEEVCYTVINHIPHQRSSLSSNDDGYENIDSLTRKVRQFRERSETEYALLRTSVSRPCSCTHEHDYEVVFPH.

Residues 1–68 (MGNYLLRKLS…ENGSGSEEVC (68 aa)) are disordered. Basic and acidic residues predominate over residues 22 to 48 (GNPDEERKRQEMTTFERKLQDQDKKSQ). Positions 26–50 (EERKRQEMTTFERKLQDQDKKSQEV) form a coiled coil. Residues 51–66 (SSTSNQENENGSGSEE) show a composition bias toward low complexity.

This chain is Germinal center-associated signaling and motility-like protein (GCSAML), found in Homo sapiens (Human).